We begin with the raw amino-acid sequence, 1481 residues long: Cystic fibrosis transmembrane conductance regulator (1481 aa).

Residues 1–77 (MQKSPLVKAS…KLINALRRCF (77 aa)) lie on the Cytoplasmic side of the membrane. Residues 78 to 98 (LWRFIFYGILLYLGEVTKAVQ) traverse the membrane as a helical segment. The ABC transmembrane type-1 1 domain maps to 81 to 365 (FIFYGILLYL…GAVQTWYDSL (285 aa)). Topologically, residues 99-122 (PLLLGRIIASYDPDNKEERSIAIY) are extracellular. Residues 123 to 146 (LAIGLCLLFIVRTLLLHPAIFGLQ) traverse the membrane as a helical segment. Residues 147–195 (HIGMQMRIAMFSLIYKKTLKLSSRVLDKISIGQLVSLLSNNLNKFDEGL) lie on the Cytoplasmic side of the membrane. A helical membrane pass occupies residues 196–216 (ALAHFVWIAPLQVTLLMGLLW). Topologically, residues 217–222 (DLLQAS) are extracellular. Residues 223-243 (AFCGLAVLIVLALFQAWLGKM) form a helical membrane-spanning segment. Topologically, residues 244-298 (MMKYRDQRAGKINERLVITSEMIENIQSVKAYCWEEAMEKMIENLRQTELKLTRK) are cytoplasmic. Residues 299 to 319 (AAYMRYFNSAAFFFSGFFVVF) traverse the membrane as a helical segment. At 320 to 339 (LSVLPYAFLQGIILRKIFTT) the chain is on the extracellular side. Residues 340-358 (ISFCIVLRMAITRQFPGAV) traverse the membrane as a helical segment. The Cytoplasmic portion of the chain corresponds to 359–859 (QTWYDSLGAI…YLRYITVHKS (501 aa)). Residues tryptophan 401, serine 435, 459 to 466 (GSTGAGKT), and glutamine 494 contribute to the ATP site. Residues 424–647 (NGDNKLFFSN…RPDFSSKLMG (224 aa)) form the ABC transporter 1 domain. Cysteine 525 carries the S-palmitoyl cysteine lipid modification. Phosphoserine is present on serine 550. The tract at residues 655 to 832 (SAERRNSILT…EEINEEDLKE (178 aa)) is disordered R region. Phosphoserine; by PKA occurs at positions 661 and 671. Phosphoserine; by PKC is present on serine 687. Lysine 689 is covalently cross-linked (Glycyl lysine isopeptide (Lys-Gly) (interchain with G-Cter in ubiquitin)). Serine 701 and serine 713 each carry phosphoserine; by PKA. Threonine 718 bears the Phosphothreonine mark. A phosphoserine; by PKA mark is found at serine 738, serine 769, serine 796, and serine 814. A helical transmembrane segment spans residues 860-880 (LILVLIWCLIIFLAEVAASLV). The 297-residue stretch at 860–1156 (LILVLIWCLI…AVNSSIDVDS (297 aa)) folds into the ABC transmembrane type-1 2 domain. Residues 881 to 919 (VLWLLKNNTPQQEMNSTQSGNRSYPVIITNTSFYYIFYI) are Extracellular-facing. N-linked (GlcNAc...) asparagine glycans are attached at residues asparagine 895 and asparagine 901. Residues 920–940 (YVGVADTLLALGLFRGLPLVH) traverse the membrane as a discontinuously helical segment. Over 941-991 (TLITVSKILHHKMLRSVLQAPMSTLNALKAGGILNRFSKDIAILDDLLPLT) the chain is Cytoplasmic. A helical transmembrane segment spans residues 992-1012 (IFDFIQLLLIVIGAIAVVSVL). Topologically, residues 1013 to 1014 (QP) are extracellular. The helical transmembrane segment at 1015-1035 (YIFLATVPVIAAFIMLRAYFL) threads the bilayer. Topologically, residues 1036-1096 (HTSQQLKQLE…TANWFLYLST (61 aa)) are cytoplasmic. The helical transmembrane segment at 1097–1117 (LRWFQMRIEMIFVIFFIAVTF) threads the bilayer. The Extracellular portion of the chain corresponds to 1118-1131 (ISILTTGEGQGSVG). The helical transmembrane segment at 1132–1152 (IILTLAMNIMSTLQWAVNSSI) threads the bilayer. The Cytoplasmic segment spans residues 1153–1481 (DVDSLMRSVS…TEEEVQETRL (329 aa)). In terms of domain architecture, ABC transporter 2 spans 1211–1444 (MIVKDLTAKY…KSLFRQAISS (234 aa)). Residues tyrosine 1220 and 1245-1252 (GRTGSGKS) contribute to the ATP site. The segment at 1387–1481 (RTIKQAFADC…TEEEVQETRL (95 aa)) is interaction with GORASP2. Cysteine 1396 carries S-palmitoyl cysteine lipidation. Phosphoserine occurs at positions 1445 and 1457. Positions 1453–1462 (HRNSSKHKSR) are enriched in basic residues. The segment at 1453–1481 (HRNSSKHKSRSQITALKEETEEEVQETRL) is disordered. Positions 1471–1481 (ETEEEVQETRL) are enriched in acidic residues. Residues 1479–1481 (TRL) carry the PDZ-binding motif.

It belongs to the ABC transporter superfamily. ABCC family. CFTR transporter (TC 3.A.1.202) subfamily. As to quaternary structure, monomer; does not require oligomerization for channel activity. May form oligomers in the membrane. Interacts with SLC26A3, SLC26A6 and NHERF1. Interacts with SHANK2. Interacts with MYO6. Interacts (via C-terminus) with GOPC (via PDZ domain); this promotes CFTR internalization and thereby decreases channel activity. Interacts with SLC4A7 through NHERF1. Found in a complex with MYO5B and RAB11A. Interacts with ANO1. Interacts with SLC26A8. Interacts with AHCYL1; the interaction increases CFTR activity. Interacts with CSE1L. The core-glycosylated form interacts with GORASP2 (via PDZ GRASP-type 1 domain) in respone to ER stress. Interacts with MARCHF2; the interaction leads to CFTR ubiqtuitination and degradation. Interacts with ADGRG2. N-glycosylated. Post-translationally, phosphorylated; cAMP treatment promotes phosphorylation and activates the channel. Dephosphorylation decreases the ATPase activity (in vitro). Phosphorylation at PKA sites activates the channel. Phosphorylation at PKC sites enhances the response to phosphorylation by PKA. Phosphorylated by AMPK; this inhibits channel activity. In terms of processing, ubiquitinated, leading to its degradation in the lysosome. Deubiquitination by USP10 in early endosomes enhances its endocytic recycling to the cell membrane. Ubiquitinated by RNF185 during ER stress. Ubiquitinated by MARCHF2.

The protein localises to the apical cell membrane. It is found in the early endosome membrane. It localises to the cell membrane. Its subcellular location is the recycling endosome membrane. The protein resides in the endoplasmic reticulum membrane. The protein localises to the nucleus. The enzyme catalyses ATP + H2O + closed Cl(-) channel = ADP + phosphate + open Cl(-) channel.. It carries out the reaction chloride(in) = chloride(out). It catalyses the reaction hydrogencarbonate(in) = hydrogencarbonate(out). The catalysed reaction is ATP + H2O = ADP + phosphate + H(+). In terms of biological role, epithelial ion channel that plays an important role in the regulation of epithelial ion and water transport and fluid homeostasis. Mediates the transport of chloride ions across the cell membrane. Possesses an intrinsic ATPase activity and utilizes ATP to gate its channel; the passive flow of anions through the channel is gated by cycles of ATP binding and hydrolysis by the ATP-binding domains. The ion channel is also permeable to HCO(3)(-); selectivity depends on the extracellular chloride concentration. Exerts its function also by modulating the activity of other ion channels and transporters. Contributes to the regulation of the pH and the ion content of the epithelial fluid layer. Modulates the activity of the epithelial sodium channel (ENaC) complex, in part by regulating the cell surface expression of the ENaC complex. May regulate bicarbonate secretion and salvage in epithelial cells by regulating the transporter SLC4A7. Can inhibit the chloride channel activity of ANO1. Plays a role in the chloride and bicarbonate homeostasis during sperm epididymal maturation and capacitation. This Cavia porcellus (Guinea pig) protein is Cystic fibrosis transmembrane conductance regulator.